The primary structure comprises 248 residues: 14-3-3 protein (248 aa).

Coiled coils occupy residues 13-33 (MAQL…MRKI) and 91-111 (RQKI…LLQE). 135 to 136 (RY) lines the O-phospho-L-serine pocket. At T214 the chain carries Phosphothreonine. Residues 237-248 (TDSAGDDNAEEK) carry the Putative polyglycylation target motif (T/G)X0-1(D/E)X1-3-G(D/E)X1-2(gE)2-4, where X is polar or negatively charged amino acid, and gE is polyglycylated glutamine motif. E246 carries the post-translational modification 5-glutamyl polyglycine.

It belongs to the 14-3-3 family. In terms of assembly, homodimer. Homodimerizes via N-terminal domains. Oligomerizes forming homotrimers, homotetramers and protein filaments. Oligomerization is hindered by polyglycylation in vivo. Interacts with a large number of both cytosolic and membrane proteins in trophozoites and encysting parasites. Interacts with a serine/threonine protein kinase GL50803_112076 (gCDC7). Component of a multiprotein complex containing gCDC7 and GL50803_94117 (gDBF4), a regulatory subunit of gCDC7, during both the trophozoite and encysting stages of the parasite. Interacts with fructose-bisphosphate aldolase GL50803_11043 (gFBA), pyruvate kinase GL50803_17143 (gPyk), acetyl-CoA synthetase GL50803_13608 (gACS), protein kinase GL50803_22165 (gSTE), DEAD box RNA helicase GL50803_34684 (gVASA) and Golgi/cell cycle associated protein GL50803_17472 (gGCCA). Interacts with actin. Interacts with both monomeric phosphorylated and unphosphorylated actin. The interaction is enhanced by phosphorylation of actin and inhibited by Rho GTPase Rac. In terms of processing, phosphorylated constitutively throughout the life cycle. Phosphorylation is very high in trophozoites and encysting cells of 12 hours. Phosphorylated during excystation. Phosphorylation promotes its binding to various target proteins and is critical for encystation process. Phosphorylation modification is not influenced by polyglycylation modification. Polyglycylated on a glutamate residue, resulting in polyglycine chain on the gamma-carboxyl group. Polyglycylated by the tubulin--tyrosine ligase-like protein GL50803_8456 (gTTLL3). The polyglycine chain is shortened by metallopeptidases of the M20 family, namely dipeptidases GL50803_15832 (gDIP1) and GL50803_8407 (gDIP2). The length of the polyglycine chain is developmental stage-dependent. In trophozoites, glycine residues range from 10 to 31, with the greatest occurrence of 21 residues. In 12 hour encystation stage, glycine residues range from 6 to 22, with the greatest occurrence of 10 residues. The differential rate of polyglycylation/deglycylation during the encystation process regulates the intracellular localization of this protein. Relocalizes partially from the cytoplasm inside the nuclei following the shortening of the polyglycine chain in encysting cells. Polyglycylation modification is not influenced by phosphorylation modification. Polyglycylation prevents oligomerization in vivo.

It is found in the cytoplasm. Its subcellular location is the cytoskeleton. The protein localises to the nucleus. It localises to the cell projection. The protein resides in the cilium. It is found in the flagellum. Its subcellular location is the spindle. The protein localises to the nucleus envelope. It localises to the endoplasmic reticulum. Its function is as follows. Adapter protein implicated in the regulation of a large spectrum of both general and specialized signaling pathways. Binds to a large number of partners, usually by recognition of a phosphoserine or phosphothreonine motif. Binding generally results in the modulation of the activity of the binding partner. Binds with varying affinity to various synthetic phosphopeptides having a consensus binding motif RSX(pS/pT)XP, called mode-1, where X is any residue and pS/pT is a phosphorylated serine/threonine, and to synthetic phosphopeptides having a consensus binding motif Xp(S/T)X1-2-COOH, called mode-3, in which the phosphorylated residue occupies the penultimate C-terminal position in the target protein, but does not bind to their unphosphorylated counterparts. Binds to synthetic human RAF1 phosphopeptides, but not to their unphosphorylated forms. Binds to difopein, a polypeptide containing a phosphorylation-independent binding motif. Involved in encystation. Involved in cell proliferation. Required for actin and tubulin cytoskeletal organization. Regulates actin filament formation and nuclear size. In Giardia intestinalis (strain ATCC 50803 / WB clone C6) (Giardia lamblia), this protein is 14-3-3 protein.